The following is a 297-amino-acid chain: uncharacterized protein (297 aa).

WD repeat units follow at residues K12 to E51, G54 to R93, G96 to I135, D140 to D177, F179 to S217, K222 to S261, and V265 to N297.

Belongs to the WD repeat MORG1 family.

The protein resides in the cytoplasm. The protein localises to the nucleus. This is an uncharacterized protein from Schizosaccharomyces pombe (strain 972 / ATCC 24843) (Fission yeast).